The primary structure comprises 243 residues: Putative outer membrane protein RP075 (243 aa).

Residues 1 to 23 form the signal peptide; it reads MLRIVKKLWVILFISNISINSFA.

It belongs to the OmpW/AlkL family.

It is found in the cell outer membrane. This chain is Putative outer membrane protein RP075, found in Rickettsia prowazekii (strain Madrid E).